The following is a 182-amino-acid chain: UPF0215 protein Pcal_0119 (182 aa).

Belongs to the UPF0215 family.

This chain is UPF0215 protein Pcal_0119, found in Pyrobaculum calidifontis (strain DSM 21063 / JCM 11548 / VA1).